The following is a 214-amino-acid chain: MSGLFITFEGGEGAGKSTQIALLASHLRNHGFDPVITREPGGSPGAEAIRHVILSGNAETYGPAMEALLFAAARADHVDQLIRPTLAEGRIVLCDRFIDSSRAYQGVTGNLDATYMAAIERIAIDGAMPDLTLVLDICAERGLSRAGKRRGSDTADRFEKEDIAVHEARRQAFLEIARQEPARCKVIDADRSQEKIADEIRSVVDTILTEKGLL.

10 to 17 provides a ligand contact to ATP; it reads GGEGAGKS.

Belongs to the thymidylate kinase family.

The enzyme catalyses dTMP + ATP = dTDP + ADP. Its function is as follows. Phosphorylation of dTMP to form dTDP in both de novo and salvage pathways of dTTP synthesis. This chain is Thymidylate kinase, found in Brucella abortus (strain S19).